Here is a 127-residue protein sequence, read N- to C-terminus: MDLIAQIEAEQIAALGKDIPDFRAGDTVRVGFKVTEGTRTRVQNYEGVCIARNNGHGIAGSFTVRKISFGEGVERVFPLHSTNIESITVVRRGRVRRAKLYYLRSRRGKSARIAENTNYKPKSGASV.

Belongs to the bacterial ribosomal protein bL19 family.

In terms of biological role, this protein is located at the 30S-50S ribosomal subunit interface and may play a role in the structure and function of the aminoacyl-tRNA binding site. The sequence is that of Large ribosomal subunit protein bL19 from Roseobacter denitrificans (strain ATCC 33942 / OCh 114) (Erythrobacter sp. (strain OCh 114)).